The chain runs to 90 residues: Probable Fe(2+)-trafficking protein (90 aa).

This sequence belongs to the Fe(2+)-trafficking protein family. In terms of assembly, monomer.

Its function is as follows. Could be a mediator in iron transactions between iron acquisition and iron-requiring processes, such as synthesis and/or repair of Fe-S clusters in biosynthetic enzymes. This is Probable Fe(2+)-trafficking protein from Sodalis glossinidius (strain morsitans).